A 485-amino-acid polypeptide reads, in one-letter code: Glutamyl-tRNA(Gln) amidotransferase subunit A (485 aa).

Residues Lys79 and Ser154 each act as charge relay system in the active site. The active-site Acyl-ester intermediate is the Ser178.

Belongs to the amidase family. GatA subfamily. As to quaternary structure, heterotrimer of A, B and C subunits.

The enzyme catalyses L-glutamyl-tRNA(Gln) + L-glutamine + ATP + H2O = L-glutaminyl-tRNA(Gln) + L-glutamate + ADP + phosphate + H(+). Allows the formation of correctly charged Gln-tRNA(Gln) through the transamidation of misacylated Glu-tRNA(Gln) in organisms which lack glutaminyl-tRNA synthetase. The reaction takes place in the presence of glutamine and ATP through an activated gamma-phospho-Glu-tRNA(Gln). The chain is Glutamyl-tRNA(Gln) amidotransferase subunit A from Geobacillus thermodenitrificans (strain NG80-2).